The primary structure comprises 674 residues: E3 ubiquitin ligase Rnf157 (674 aa).

An RING-type zinc finger spans residues 277–316 (CVVCLSDVRDTLILPCRHLCLCNACADTLRYQASNCPICR). Disordered regions lie at residues 376–404 (LTPS…GSDI) and 433–610 (QNSS…TGRE). Positions 469–508 (TPESENLTLSSSGAIDQSSCTGTPLSPTISSPEDPLSSSL) are enriched in polar residues. A compositionally biased stretch (low complexity) spans 509-526 (AQSIMSMASSHSQQSQLS). Over residues 527-537 (TDTVSSMSGSY) the composition is skewed to polar residues. The span at 583 to 604 (EEMDAEGNVTEEEFASPEEDDG) shows a compositional bias: acidic residues.

It is found in the cytoplasm. It catalyses the reaction S-ubiquitinyl-[E2 ubiquitin-conjugating enzyme]-L-cysteine + [acceptor protein]-L-lysine = [E2 ubiquitin-conjugating enzyme]-L-cysteine + N(6)-ubiquitinyl-[acceptor protein]-L-lysine.. E3 ubiquitin ligase that ubiquitinates apbb1 for its degradation by the proteasome and thus prevents apoptosis and promotes survival of neurons. Has a dual role in neurons as it is also required for dendrite growth and maintenance for which its ligase activity is not critical. May act as a scaffold molecule to regulate this process. Acts as a downstream effector of the interconnected PI3K and MAPK signaling pathways and thus participates in the regulation of the cell cycle. This chain is E3 ubiquitin ligase Rnf157 (rnf157), found in Xenopus laevis (African clawed frog).